Here is a 715-residue protein sequence, read N- to C-terminus: Fatty acid oxidation complex subunit alpha (715 aa).

The enoyl-CoA hydratase/isomerase stretch occupies residues 1-190; sequence MIYEGKAITV…KVGAVDAVVA (190 aa). Asp297 provides a ligand contact to substrate. Residues 312–715 form a 3-hydroxyacyl-CoA dehydrogenase region; the sequence is KDVKQAAVLG…MAKNGQSFFG (404 aa). Residues Met325, Asp344, 401-403, Lys408, and Ser430 each bind NAD(+); that span reads VVE. His451 functions as the For 3-hydroxyacyl-CoA dehydrogenase activity in the catalytic mechanism. Asn454 is a binding site for NAD(+). Residues Asn501 and Tyr660 each contribute to the substrate site.

It in the N-terminal section; belongs to the enoyl-CoA hydratase/isomerase family. This sequence in the C-terminal section; belongs to the 3-hydroxyacyl-CoA dehydrogenase family. As to quaternary structure, heterotetramer of two alpha chains (FadB) and two beta chains (FadA).

It carries out the reaction a (3S)-3-hydroxyacyl-CoA + NAD(+) = a 3-oxoacyl-CoA + NADH + H(+). It catalyses the reaction a (3S)-3-hydroxyacyl-CoA = a (2E)-enoyl-CoA + H2O. The catalysed reaction is a 4-saturated-(3S)-3-hydroxyacyl-CoA = a (3E)-enoyl-CoA + H2O. The enzyme catalyses (3S)-3-hydroxybutanoyl-CoA = (3R)-3-hydroxybutanoyl-CoA. It carries out the reaction a (3Z)-enoyl-CoA = a 4-saturated (2E)-enoyl-CoA. It catalyses the reaction a (3E)-enoyl-CoA = a 4-saturated (2E)-enoyl-CoA. The protein operates within lipid metabolism; fatty acid beta-oxidation. Its function is as follows. Involved in the aerobic and anaerobic degradation of long-chain fatty acids via beta-oxidation cycle. Catalyzes the formation of 3-oxoacyl-CoA from enoyl-CoA via L-3-hydroxyacyl-CoA. It can also use D-3-hydroxyacyl-CoA and cis-3-enoyl-CoA as substrate. This chain is Fatty acid oxidation complex subunit alpha, found in Pseudomonas fluorescens (strain Pf0-1).